The chain runs to 350 residues: Protein-glutamate methylesterase/protein-glutamine glutaminase 1 (350 aa).

Positions 1–116 constitute a Response regulatory domain; the sequence is MVVDDSAVVR…KGFLHDSAKV (116 aa). Asp-50 carries the post-translational modification 4-aspartylphosphate. The region spanning 160 to 350 is the CheB-type methylesterase domain; sequence LKTTEQLVAI…IPQAILDCSH (191 aa). Active-site residues include Ser-172, His-198, and Asp-294.

The protein belongs to the CheB family. In terms of processing, phosphorylated by CheA. Phosphorylation of the N-terminal regulatory domain activates the methylesterase activity.

The protein localises to the cytoplasm. The enzyme catalyses [protein]-L-glutamate 5-O-methyl ester + H2O = L-glutamyl-[protein] + methanol + H(+). It carries out the reaction L-glutaminyl-[protein] + H2O = L-glutamyl-[protein] + NH4(+). Functionally, involved in chemotaxis. Part of a chemotaxis signal transduction system that modulates chemotaxis in response to various stimuli. Catalyzes the demethylation of specific methylglutamate residues introduced into the chemoreceptors (methyl-accepting chemotaxis proteins or MCP) by CheR. Also mediates the irreversible deamidation of specific glutamine residues to glutamic acid. The sequence is that of Protein-glutamate methylesterase/protein-glutamine glutaminase 1 from Photobacterium profundum (strain SS9).